A 277-amino-acid polypeptide reads, in one-letter code: NADPH-dependent 7-cyano-7-deazaguanine reductase (277 aa).

Substrate is bound at residue 83–85 (VES). Residue 85 to 86 (SK) coordinates NADPH. The Thioimide intermediate role is filled by C184. D191 (proton donor) is an active-site residue. Residue 223 to 224 (HE) participates in substrate binding. 252–253 (RG) is a binding site for NADPH.

Belongs to the GTP cyclohydrolase I family. QueF type 2 subfamily. As to quaternary structure, homodimer.

The protein localises to the cytoplasm. It carries out the reaction 7-aminomethyl-7-carbaguanine + 2 NADP(+) = 7-cyano-7-deazaguanine + 2 NADPH + 3 H(+). It functions in the pathway tRNA modification; tRNA-queuosine biosynthesis. Catalyzes the NADPH-dependent reduction of 7-cyano-7-deazaguanine (preQ0) to 7-aminomethyl-7-deazaguanine (preQ1). This is NADPH-dependent 7-cyano-7-deazaguanine reductase from Cupriavidus metallidurans (strain ATCC 43123 / DSM 2839 / NBRC 102507 / CH34) (Ralstonia metallidurans).